The primary structure comprises 454 residues: UDP-N-acetylmuramate--L-alanine ligase (454 aa).

113–119 is a binding site for ATP; the sequence is GSHGKTT.

It belongs to the MurCDEF family.

The protein localises to the cytoplasm. It catalyses the reaction UDP-N-acetyl-alpha-D-muramate + L-alanine + ATP = UDP-N-acetyl-alpha-D-muramoyl-L-alanine + ADP + phosphate + H(+). It functions in the pathway cell wall biogenesis; peptidoglycan biosynthesis. Cell wall formation. This is UDP-N-acetylmuramate--L-alanine ligase from Sulfurihydrogenibium sp. (strain YO3AOP1).